The following is a 443-amino-acid chain: Cyclic GMP-AMP synthase (443 aa).

An ATP-binding site is contributed by S61. Residues D78 and D80 contribute to the active site. D80 serves as a coordination point for Mg(2+). N124 provides a ligand contact to ATP. The active site involves D138. Position 138 (D138) interacts with Mg(2+). An ATP-binding site is contributed by L208.

Belongs to the CD-NTase family. B06 subfamily. Mg(2+) is required as a cofactor.

The enzyme catalyses GTP + ATP = 3',3'-cGAMP + 2 diphosphate. The catalysed reaction is UTP + ATP = 3',3'-cUAMP + 2 diphosphate. It carries out the reaction 2 ATP = 3',3'-c-di-AMP + 2 diphosphate. It catalyses the reaction 2 GTP = 3',3'-c-di-GMP + 2 diphosphate. The enzyme catalyses UTP + GTP = 3',3'-cGMP-UMP + 2 diphosphate. In terms of biological role, cyclic nucleotide synthase (second messenger synthase) of a CBASS antivirus system. CBASS (cyclic oligonucleotide-based antiphage signaling system) provides immunity against bacteriophages. The CD-NTase protein (CdnB, this protein) synthesizes cyclic nucleotides in response to infection; these serve as specific second messenger signals. The signals activate a diverse range of effectors, leading to bacterial cell death and thus abortive phage infection. The effector protein for this system is membrane protein Cap15. Functionally, catalyzes the synthesis of 3',3'-cyclic GMP-AMP (3'3'-cGAMP) from GTP and ATP, a second messenger in cell signal transduction. Also makes cyclic UMP-AMP, cyclic UMP-GMP, cyclic di-AMP and cyclic-di-GMP. Protects E.coli against phage infection. When the CBASS operon (cdnB-cap15) is introduced in E.coli MG1655 there is about 100-fold protection against phage T2 and about 10-fold protection against phage T5 and T6. The polypeptide is Cyclic GMP-AMP synthase (Escherichia albertii).